The following is a 197-amino-acid chain: Suppressor of RNA silencing p3 (197 aa).

It belongs to the tenuiviruses p3 protein family. Homodimer.

It localises to the host cytoplasm. Functionally, acts as a suppressor of RNA-mediated gene silencing, also known as post-transcriptional gene silencing (PTGS), presumably through the binding of dsRNA. The chain is Suppressor of RNA silencing p3 from Rottboellia (Sorghum).